Here is a 91-residue protein sequence, read N- to C-terminus: Protein YchS (91 aa).

This is Protein YchS (ychS) from Escherichia coli O157:H7.